The chain runs to 252 residues: MTQVLLNPSLEEAYHFLVKNMYNNLITLFGDCEIQYEGRAYSHASLASRLIIIKVDGSVIVHEHTKREPINWQPPGSVIVVRKESGVLSIESIRKRPKERLYIILRRLYYLTSAEVNSGNFDIKGTEKDIVDLVLENPNLIEEGFKPIQREYRIPYGIVDLFGYDKFGTPFVLEFKRSKATLQAVSQLHRYYMFFLESYGKARGALVSPGISEKALNLIEKLRLEYIDANRIFDSITNSSRYTINISNIQRS.

It belongs to the NucS endonuclease family.

The protein localises to the cytoplasm. Its function is as follows. Cleaves both 3' and 5' ssDNA extremities of branched DNA structures. This is Endonuclease NucS from Sulfurisphaera tokodaii (strain DSM 16993 / JCM 10545 / NBRC 100140 / 7) (Sulfolobus tokodaii).